A 348-amino-acid polypeptide reads, in one-letter code: Thioesterase-like protein TwmA (348 aa).

It functions in the pathway secondary metabolite biosynthesis. In terms of biological role, thioesterase-like protein; part of the gene cluster that mediates the biosynthesis of wortmanamides A and B, reduced long-chain polyketides amidated with a specific omega-amino acid, 5-aminopentanoic acid (5PA). The PKS modules of TwmB are involved in the synthesis of the polyketide backbone, whereas the non-canonical C domain of TwmB is a bonafide condensation domain that specifically selects 5PA and catalyzes amidation to release polyketide chain. The C domain clearly prefers C16 and C18 fatty acyl substrates, which is consistent with simultaneous formation of both octaketide and nonaketide acyl amides wortmanamides A and B. Because TwmB lacks a designated enoylreductase (ER) domain, the required activity is provided the enoyl reductase TwmE. The roles of the remaining enzymes have still to be clarified. This chain is Thioesterase-like protein TwmA, found in Talaromyces wortmannii (Penicillium wortmannii).